A 172-amino-acid chain; its full sequence is Putative phosphoesterase BT9727_1129 (172 aa).

The Proton donor role is filled by His34. 2 consecutive short sequence motifs (HXTX) follow at residues 34-37 (HITL) and 115-118 (HLTI). The active-site Proton acceptor is His115.

Belongs to the 2H phosphoesterase superfamily. YjcG family.

The protein is Putative phosphoesterase BT9727_1129 of Bacillus thuringiensis subsp. konkukian (strain 97-27).